Here is a 275-residue protein sequence, read N- to C-terminus: Ceramide synthase (275 aa).

The region spanning 34 to 261 (ADAVIVSARL…ICRGACRLFR (228 aa)) is the TLC domain. Transmembrane regions (helical) follow at residues 130–150 (FLMV…SVVW), 159–179 (LGCM…KILI), 194–214 (ALML…LYWA), and 232–252 (AHVN…FFLI).

As to expression, each isoform has a distinct expression pattern. Isoform 1 is highly expressed in brain. Isoform 2 is expressed at low levels, if any, in all analyzed tissues, with slightly higher levels in testis. Isoform 3 is expressed at very high levels in testis and, at lower levels, in white adipose tissue. In epididymal fat, isoform 3 is expressed at higher levels in obese mice compared with lean mice. By contrast, isoform 1 and 2 levels are significantly lower in obese mice compared with lean mice.

It localises to the golgi apparatus membrane. It is found in the endoplasmic reticulum membrane. The catalysed reaction is sphing-4-enine + octadecanoyl-CoA = N-octadecanoylsphing-4-enine + CoA + H(+). It catalyses the reaction eicosanoyl-CoA + sphing-4-enine = N-eicosanoyl-sphing-4-enine + CoA + H(+). The enzyme catalyses sphing-4-enine + hexadecanoyl-CoA = N-hexadecanoylsphing-4-enine + CoA + H(+). Functionally, involved in ceramide synthesis. In vitro, isoform 3 stimulates the production of C16-, C18- and C20-ceramides, isoform 1 slightly increases the levels of C18- and C20-ceramides, while isoform 2 exhibits only minimal activity. May interfere with adipogenesis by stimulating ceramide synthesis. This is Ceramide synthase (Tlcd3b) from Mus musculus (Mouse).